The chain runs to 92 residues: Large ribosomal subunit protein bL27 (92 aa).

The tract at residues 1 to 20 is disordered; it reads MAHKKAGGSTRNGRDSNPKY.

It belongs to the bacterial ribosomal protein bL27 family.

In Legionella pneumophila (strain Paris), this protein is Large ribosomal subunit protein bL27.